The sequence spans 329 residues: Acetyl-coenzyme A carboxylase carboxyl transferase subunit alpha (329 aa).

In terms of domain architecture, CoA carboxyltransferase C-terminal spans 40 to 294 (QLESLAARRR…RAAIERHLEQ (255 aa)).

It belongs to the AccA family. In terms of assembly, acetyl-CoA carboxylase is a heterohexamer composed of biotin carboxyl carrier protein (AccB), biotin carboxylase (AccC) and two subunits each of ACCase subunit alpha (AccA) and ACCase subunit beta (AccD).

The protein localises to the cytoplasm. The enzyme catalyses N(6)-carboxybiotinyl-L-lysyl-[protein] + acetyl-CoA = N(6)-biotinyl-L-lysyl-[protein] + malonyl-CoA. It participates in lipid metabolism; malonyl-CoA biosynthesis; malonyl-CoA from acetyl-CoA: step 1/1. Component of the acetyl coenzyme A carboxylase (ACC) complex. First, biotin carboxylase catalyzes the carboxylation of biotin on its carrier protein (BCCP) and then the CO(2) group is transferred by the carboxyltransferase to acetyl-CoA to form malonyl-CoA. The protein is Acetyl-coenzyme A carboxylase carboxyl transferase subunit alpha of Synechococcus sp. (strain CC9605).